The following is a 157-amino-acid chain: Pyruvoyl-dependent arginine decarboxylase 2 (157 aa).

At S43 the chain carries Pyruvic acid (Ser).

It belongs to the PdaD family. Requires pyruvate as cofactor.

It catalyses the reaction L-arginine + H(+) = agmatine + CO2. This is Pyruvoyl-dependent arginine decarboxylase 2 (pdaD2) from Archaeoglobus fulgidus (strain ATCC 49558 / DSM 4304 / JCM 9628 / NBRC 100126 / VC-16).